Here is a 2082-residue protein sequence, read N- to C-terminus: Probable ATP-dependent helicase PF08_0048 (2082 aa).

Residues 66 to 138 form the HSA domain; the sequence is KIVEPAKTPE…EEKRLKLYSK (73 aa). Residues 209–221 show a composition bias toward low complexity; that stretch reads NNSEIVNNNASSV. Disordered regions lie at residues 209–234 and 301–470; these read NNSE…DDLT and NVIE…SPTR. 2 stretches are compositionally biased toward basic and acidic residues: residues 419 to 448 and 455 to 465; these read NSDH…HIDN and TGEDYKSDKEN. Residues 476–531 are a coiled coil; it reads KKEKYDEYDTKLKIEKREEENKNYEKDEHEYESDNYDKEKINKKKELILLKNDIEN. The segment at 532–641 is disordered; that stretch reads DSDETSEHIK…KNDSDDNDDI (110 aa). Residues 536–545 are compositionally biased toward basic and acidic residues; that stretch reads TSEHIKRDSR. Over residues 579–598 the composition is skewed to low complexity; the sequence is DNNNSENDNNNDNNNDNNND. A compositionally biased stretch (acidic residues) spans 599–627; that stretch reads NNDDNNDDNNDDNNDDNNDDNNDDNNDDN. The region spanning 674–839 is the Helicase ATP-binding domain; sequence LYLYKNNING…WSLLHFLMPN (166 aa). Position 687–694 (687–694) interacts with ATP; it reads DEMGLGKT. Residues 790–793 carry the DEAH box motif; that stretch reads DEAH. A disordered region spans residues 1199-1255; that stretch reads EQNNNNSKDNNNNIDNNNNIDNNNNIDNNNNIDNNNNIDNNNNNIDNNNNIDNHHNN. Positions 1772 to 1922 constitute a Helicase C-terminal domain; sequence ALEKLLSKCK…NICINMGNFN (151 aa). Positions 1972–2060 form a coiled coil; that stretch reads EQVENKDKMN…DEMRMKIEIE (89 aa).

It belongs to the SNF2/RAD54 helicase family. SWR1 subfamily. Component of a chromatin-remodeling complex.

Its subcellular location is the nucleus. Catalytic component of a chromatin remodeling complex. The polypeptide is Probable ATP-dependent helicase PF08_0048 (Plasmodium falciparum (isolate 3D7)).